Consider the following 171-residue polypeptide: 3-hydroxydecanoyl-[acyl-carrier-protein] dehydratase (171 aa).

Histidine 70 is an active-site residue.

Belongs to the thioester dehydratase family. FabA subfamily. In terms of assembly, homodimer.

Its subcellular location is the cytoplasm. The enzyme catalyses a (3R)-hydroxyacyl-[ACP] = a (2E)-enoyl-[ACP] + H2O. It catalyses the reaction (3R)-hydroxydecanoyl-[ACP] = (2E)-decenoyl-[ACP] + H2O. The catalysed reaction is (2E)-decenoyl-[ACP] = (3Z)-decenoyl-[ACP]. Its pathway is lipid metabolism; fatty acid biosynthesis. Necessary for the introduction of cis unsaturation into fatty acids. Catalyzes the dehydration of (3R)-3-hydroxydecanoyl-ACP to E-(2)-decenoyl-ACP and then its isomerization to Z-(3)-decenoyl-ACP. Can catalyze the dehydratase reaction for beta-hydroxyacyl-ACPs with saturated chain lengths up to 16:0, being most active on intermediate chain length. In Shewanella pealeana (strain ATCC 700345 / ANG-SQ1), this protein is 3-hydroxydecanoyl-[acyl-carrier-protein] dehydratase.